A 33-amino-acid chain; its full sequence is Dermaseptin-J7 (33 aa).

V33 is modified (valine amide).

Expressed by the skin glands.

It is found in the secreted. Functionally, has antimicrobial activity. In Phasmahyla jandaia (Jandaia leaf frog), this protein is Dermaseptin-J7.